Consider the following 1108-residue polypeptide: Topless-related protein 3 (1108 aa).

One can recognise a LisH domain in the interval 4 to 36 (LSRELVFLILQFLEEEKFKESVHRLEKESGFFF). The CTLH domain occupies 34-92 (FFFNTKYFDEKVLAGEWDDVETYLSGFTKVDDNRYSMKIFFEIRKQKYLEALDRQEKAK). Residue Ser214 is modified to Phosphoserine. WD repeat units follow at residues 343–383 (HQGS…RLVS), 405–444 (ETPI…DLRQ), 450–491 (AHVG…HFTF), 493–534 (GHDA…SRVD), 583–623 (EFQK…VLTS), and 628–667 (GGLP…RSLR). Residues 706–725 (HSQMLNGVDPSKSRIDDSTD) are disordered. A compositionally biased stretch (basic and acidic residues) spans 716 to 725 (SKSRIDDSTD). WD repeat units lie at residues 751–790 (GSST…QNPS), 818–856 (NLEN…VMTT), 859–899 (PPPP…VKSK), 902–941 (GHQK…KRKS), and 994–1033 (SLSA…LRCR). The interval 1084–1108 (GMIPPSEAINSPSTTSNQTPEQLQR) is disordered. The segment covering 1091–1108 (AINSPSTTSNQTPEQLQR) has biased composition (polar residues).

In terms of assembly, tetramer. Interacts with NINJA/AFPH2. Interacts with SMXL6. Interacts with SPL (via EAR motif). Interacts with SPEAR3/TIE1.

Its subcellular location is the nucleus. Its function is as follows. Transcriptional corepressor. Negative regulator of jasmonate responses. This Arabidopsis thaliana (Mouse-ear cress) protein is Topless-related protein 3 (TPR3).